Reading from the N-terminus, the 100-residue chain is Urease subunit gamma (100 aa).

The protein belongs to the urease gamma subunit family. As to quaternary structure, heterotrimer of UreA (gamma), UreB (beta) and UreC (alpha) subunits. Three heterotrimers associate to form the active enzyme.

It localises to the cytoplasm. It catalyses the reaction urea + 2 H2O + H(+) = hydrogencarbonate + 2 NH4(+). The protein operates within nitrogen metabolism; urea degradation; CO(2) and NH(3) from urea (urease route): step 1/1. The chain is Urease subunit gamma from Burkholderia multivorans (strain ATCC 17616 / 249).